The primary structure comprises 1041 residues: Leucine-rich repeat receptor-like protein kinase TDR (1041 aa).

Positions 1–29 (MKKKNISPSLVLHPLLLLLLPFFAFNSLA) are cleaved as a signal peptide. At 30-652 (LKFSPQLLSL…HHKEERPKKT (623 aa)) the chain is on the extracellular side. A disulfide bridge connects residues C69 and C76. Residues N78, N92, and N111 are each glycosylated (N-linked (GlcNAc...) asparagine). LRR repeat units follow at residues 80 to 104 (TAQV…IRYL), 105 to 128 (SSLL…IFDL), 130 to 152 (KLTT…ISKL), 154 to 176 (FLKV…VSRL), 177 to 199 (RFLE…AYGG), 200 to 224 (LQRL…LGLL), 225 to 248 (TELQ…FALL), 250 to 272 (NLKY…LGNL), 273 to 296 (SNLE…YSNL), 297 to 319 (KSLK…GFST), 321 to 344 (KNLT…IGEL), 345 to 368 (PELT…LGSN), 369 to 392 (GKLE…LCHG), 394 to 416 (KLYK…LTRC), 418 to 439 (SLWR…GFGS), 440 to 464 (LRNL…FATA), 466 to 488 (VLQY…IWKA), 511 to 535 (CKSF…IGHC), 536 to 558 (EKLL…EIST), 559 to 583 (LPSI…FGSS), and 585 to 607 (TITT…SFAH). A CLE peptide binding region spans residues 186–188 (GSY). The CLE peptide binding stretch occupies residues 233 to 235 (GYN). N-linked (GlcNAc...) asparagine glycans are attached at residues N258 and N271. Residues 303 to 307 (DFSSN) form a CLE peptide binding region. N-linked (GlcNAc...) asparagine glycans are attached at residues N322, N332, and N356. The tract at residues 375 to 377 (DVS) is CLE peptide binding. N378 is a glycosylation site (N-linked (GlcNAc...) asparagine). The cysteines at positions 390 and 416 are disulfide-linked. The CLE peptide binding stretch occupies residues 421-423 (RFR). Residues N430, N442, N471, N525, and N542 are each glycosylated (N-linked (GlcNAc...) asparagine). C511 and C535 form a disulfide bridge. N590 carries N-linked (GlcNAc...) asparagine glycosylation. C620 and C628 are joined by a disulfide. Residues 653–673 (AGAIVWILAAAIGVGFFVLVA) traverse the membrane as a helical segment. Residues 674-1041 (ATRCFQKSYG…HDVKCQRIGV (368 aa)) lie on the Cytoplasmic side of the membrane. At T710 the chain carries Phosphothreonine. The Protein kinase domain occupies 719 to 1001 (SKTDNILGMG…DVLLILQEAK (283 aa)). Residues 725-733 (LGMGSTGTV) and K747 contribute to the ATP site. 2 positions are modified to phosphotyrosine: Y798 and Y839. D852 functions as the Proton acceptor in the catalytic mechanism. S884 carries the phosphoserine modification. Phosphotyrosine occurs at positions 892 and 899. Residue T900 is modified to Phosphothreonine.

Belongs to the protein kinase superfamily. Ser/Thr protein kinase family. In terms of assembly, interacts specifically with the mature peptides CLE41p and CLE44p, especially in the presence of SERK2. Interacts with LURE1.2. In terms of tissue distribution, widely expressed along the vascular strands. In roots and hypocotyls, confined to procambial cells.

It localises to the cell membrane. The catalysed reaction is L-seryl-[protein] + ATP = O-phospho-L-seryl-[protein] + ADP + H(+). It catalyses the reaction L-threonyl-[protein] + ATP = O-phospho-L-threonyl-[protein] + ADP + H(+). Functionally, acts with CLE41p and CLE44p peptides as a ligand-receptor pair in a signal transduction pathway involved in the regulation of procambium maintenance and polarity during vascular-tissue development. Mediates repression of tracheary element differentiation and the promotion of procambial cells formation and polar division adjacent to phloem cells in the veins. The sequence is that of Leucine-rich repeat receptor-like protein kinase TDR from Arabidopsis thaliana (Mouse-ear cress).